A 425-amino-acid polypeptide reads, in one-letter code: Pectate lyase L (425 aa).

The signal sequence occupies residues methionine 1 to alanine 25. Cysteines 28 and 114 form a disulfide. Ca(2+)-binding residues include aspartate 209, aspartate 233, aspartate 234, and aspartate 237. Lysine 273 (proton acceptor) is an active-site residue. Ca(2+)-binding residues include asparagine 402, serine 413, alanine 416, aspartate 418, and glutamate 423.

This sequence belongs to the polysaccharide lyase 9 family. The cofactor is Ca(2+).

The protein localises to the secreted. The enzyme catalyses Eliminative cleavage of (1-&gt;4)-alpha-D-galacturonan to give oligosaccharides with 4-deoxy-alpha-D-galact-4-enuronosyl groups at their non-reducing ends.. It participates in glycan metabolism; pectin degradation; 2-dehydro-3-deoxy-D-gluconate from pectin: step 2/5. Presents an endo-cleaving activity on polygalacturonate or partially methylated pectin. This Dickeya chrysanthemi (Pectobacterium chrysanthemi) protein is Pectate lyase L (pelL).